Reading from the N-terminus, the 58-residue chain is UPF0391 membrane protein Sbal_1421 (58 aa).

2 helical membrane passes run 6–26 and 28–48; these read LVFLVVAVIAGLLGFTGIAGA and AGIAKIIFLIFIVLLVISLLV.

The protein belongs to the UPF0391 family.

The protein localises to the cell membrane. This is UPF0391 membrane protein Sbal_1421 from Shewanella baltica (strain OS155 / ATCC BAA-1091).